We begin with the raw amino-acid sequence, 475 residues long: tRNA-2-methylthio-N(6)-dimethylallyladenosine synthase (475 aa).

One can recognise an MTTase N-terminal domain in the interval 7–127; that stretch reads RKLHIKSYGC…LPKLLAKARD (121 aa). [4Fe-4S] cluster contacts are provided by Cys16, Cys52, Cys90, Cys168, Cys172, and Cys175. The 235-residue stretch at 154 to 388 folds into the Radical SAM core domain; that stretch reads RARGVSAFVT…AQLQALIDAQ (235 aa). Positions 394–456 constitute a TRAM domain; it reads RAAIGRTVEV…RYSLKGRLAS (63 aa).

It belongs to the methylthiotransferase family. MiaB subfamily. Monomer. [4Fe-4S] cluster serves as cofactor.

The protein localises to the cytoplasm. The catalysed reaction is N(6)-dimethylallyladenosine(37) in tRNA + (sulfur carrier)-SH + AH2 + 2 S-adenosyl-L-methionine = 2-methylsulfanyl-N(6)-dimethylallyladenosine(37) in tRNA + (sulfur carrier)-H + 5'-deoxyadenosine + L-methionine + A + S-adenosyl-L-homocysteine + 2 H(+). Its function is as follows. Catalyzes the methylthiolation of N6-(dimethylallyl)adenosine (i(6)A), leading to the formation of 2-methylthio-N6-(dimethylallyl)adenosine (ms(2)i(6)A) at position 37 in tRNAs that read codons beginning with uridine. In Afipia carboxidovorans (strain ATCC 49405 / DSM 1227 / KCTC 32145 / OM5) (Oligotropha carboxidovorans), this protein is tRNA-2-methylthio-N(6)-dimethylallyladenosine synthase.